The chain runs to 2093 residues: Nuclear-pore anchor (2093 aa).

4 coiled-coil regions span residues 57 to 362 (LEQK…TDEL), 439 to 529 (MILQ…RDVQ), 570 to 627 (DING…RAEE), and 688 to 1172 (QEKA…LEAK). The disordered stretch occupies residues 1175–1198 (NSAEKNSRSGTISSGSTDSDHLED). The segment covering 1182 to 1191 (RSGTISSGST) has biased composition (low complexity). Coiled-coil stretches lie at residues 1208 to 1252 (LRRT…AERA) and 1293 to 1585 (EKCQ…LKHA). 3 disordered regions span residues 1453–1489 (YEKE…AVVE), 1525–1555 (KKDE…KKEK), and 1627–2093 (SNSQ…PSPP). A compositionally biased stretch (basic and acidic residues) spans 1470–1483 (QLEEAKEEAGKRTT). Over residues 1652-1674 (STMTRVPSSTPLIKSPVATTQQL) the composition is skewed to polar residues. Composition is skewed to basic and acidic residues over residues 1710–1719 (KPEESPKVDV) and 1729–1740 (DEGKQPAAHEPE). The segment covering 1764–1779 (SEPQQDSLTQGETSSE) has biased composition (polar residues). The segment covering 1789–1808 (KGSESHPDTSEGENLAKEPA) has biased composition (basic and acidic residues). The stretch at 1818–1849 (TTDGDNEETEAENAEEKTEEYVEAQQDNEADE) forms a coiled coil. 2 stretches are compositionally biased toward acidic residues: residues 1821 to 1830 (GDNEETEAEN) and 1838 to 1903 (YVEA…EEGT). Residues 1921–1931 (TLATPTQSPSR) are compositionally biased toward polar residues. Over residues 1935 to 1963 (AMEEAETTIETPVEDDKTDEGGDAAEEAA) the composition is skewed to acidic residues. Positions 1984–2009 (TSAATTSPVSTAPTTSSTLASAITSS) are enriched in low complexity. Phosphoserine is present on serine 2022.

Part of the nuclear pore complex (NPC). The NPC has an eight-fold symmetrical structure comprising a central transport channel and two rings, the cytoplasmic and nuclear rings, to which eight filaments are attached. The cytoplasmic filaments have loose ends, while the nuclear filaments are joined in a distal ring, forming a nuclear basket. NPCs are highly dynamic in configuration and composition, and can be devided in 3 subcomplexes, the NUP62 subcomplex, the NUP107-160 subcomplex and the NUP93 subcomplex, containing approximately 30 different nucleoporin proteins. Interacts with MAD1 and (via N-terminus) with ESD4. Ubiquitous. Highest expression in the shoot apical region.

It localises to the nucleus envelope. It is found in the nucleus membrane. The protein resides in the nucleus. Its subcellular location is the nuclear pore complex. Functionally, component of the nuclear pore complex. Acts as a docking site for activities required for desumoylation and mRNA export. Required for the proper expression or localization of a subset of miRNAs. Plays a role in meristematic cell division by interacting with spindle assembly checkpoint proteins. This Arabidopsis thaliana (Mouse-ear cress) protein is Nuclear-pore anchor.